The chain runs to 108 residues: Histone H4 (108 aa).

Positions 1 to 24 are disordered; it reads MTGRGKGGKVLSLGGKGGKGAKRH. A DNA-binding region spans residues 17-21; sequence GGKGA.

Belongs to the histone H4 family. In terms of assembly, the nucleosome is a histone octamer containing two molecules each of H2A, H2B, H3 and H4 assembled in one H3-H4 heterotetramer and two H2A-H2B heterodimers. The octamer wraps approximately 147 bp of DNA.

It is found in the nucleus. It localises to the chromosome. Functionally, core component of nucleosome. Nucleosomes wrap and compact DNA into chromatin, limiting DNA accessibility to the cellular machineries which require DNA as a template. Histones thereby play a central role in transcription regulation, DNA repair, DNA replication and chromosomal stability. DNA accessibility is regulated via a complex set of post-translational modifications of histones, also called histone code, and nucleosome remodeling. The protein is Histone H4 of Mastigamoeba balamuthi (Phreatamoeba balamuthi).